The following is a 248-amino-acid chain: Homeobox-leucine zipper protein HOX15 (248 aa).

The segment at 1–44 (MAQDDEDVGLALGLSLGSGGHRRQRESRDEAPSSAAASLLTLRL) is disordered. Over residues 32 to 44 (PSSAAASLLTLRL) the composition is skewed to low complexity. Positions 91–150 (NSRKKLRLSKEQSALLEDRFKEHSTLNPKQKVALAKQLNLRPRQVEVWFQNRRARTKLKQ) form a DNA-binding region, homeobox. Positions 149-193 (KQTEVDCELLKRCCETLTEENRRLHRELQQLRALTHSTAAGFFMA) are leucine-zipper. Residues 223–248 (PTAAADRTNKPTAPHLFSPFAKSAAC) are disordered.

Belongs to the HD-ZIP homeobox family. Class II subfamily. In terms of tissue distribution, expressed in seedlings, stems, leaf blades and panicles.

Its subcellular location is the nucleus. Probable transcription factor. This chain is Homeobox-leucine zipper protein HOX15 (HOX15), found in Oryza sativa subsp. indica (Rice).